We begin with the raw amino-acid sequence, 236 residues long: MPRSKRSKLVTLAQTEKKGRENKERIFDEVRQALDTYRYVWVLRLEDVRTPVLQEIRSAWAGSKLIMGRRKVLEKALGGTRETEYKENVSGLVKQCEGMCGLLFTDETPETVTAYFREYRKADYSRAKSRAPLRVEIPAGVVYSRGGQVPAEDDVPMVHSLEPTLRNKFKMPTRIQNGKITLEQPYLVCEAGETLDVRQALILKQFGVAAAEFRVKLAAYYDGEAAAVEEVRINME.

The protein belongs to the universal ribosomal protein uL10 family. Associates with the pre-60S ribosomal particle.

The protein resides in the nucleus. It localises to the nucleolus. The protein localises to the cytoplasm. Component of the ribosome assembly machinery. Nuclear paralog of the ribosomal protein P0, it binds pre-60S subunits at an early stage of assembly in the nucleolus, and is replaced by P0 in cytoplasmic pre-60S subunits and mature 80S ribosomes. The sequence is that of Ribosome assembly factor mrt4 from Eremothecium gossypii (strain ATCC 10895 / CBS 109.51 / FGSC 9923 / NRRL Y-1056) (Yeast).